Here is a 251-residue protein sequence, read N- to C-terminus: Prolactin-7C1 (251 aa).

An N-terminal signal peptide occupies residues 1–30 (MLLSLTHPSFLAMLPMLLMSNLLQWEGVTS). Asn-57 carries an N-linked (GlcNAc...) asparagine glycan. 2 disulfide bridges follow: Cys-101-Cys-217 and Cys-234-Cys-242.

This sequence belongs to the somatotropin/prolactin family. As to expression, expressed exclusively in the placenta. Expressed in spongiotrophoblast cells and trophoblast giant cells of the junctional zone and in labyrinthine trophoblast.

It is found in the secreted. The chain is Prolactin-7C1 (Prl7c1) from Mus musculus (Mouse).